The following is a 185-amino-acid chain: uncharacterized protein (185 aa).

This is an uncharacterized protein from Haemophilus influenzae (strain ATCC 51907 / DSM 11121 / KW20 / Rd).